The following is a 218-amino-acid chain: MSTLSPSVVISDDEPGYDLDLFCIPNHYAEDLEKVFIPHGLIMDRTERLARDVMKEMGGHHIVALCVLKGGYKFFADLLDYIKALNRNSDRSIPMTVDFIRLKSYCNDQSTGDIKVIGGDDLSTLTGKNVLIVEDIIDTGKTMQTLLSLVKQYSPKMVKVASLLVKRTSRSVGYRPDFVGFEIPDKFVVGYALDYNEHFRDLNHVCVISESGKAKYKA.

Lysine 69 serves as a coordination point for GMP. N6-acetyllysine is present on lysine 103. A Glycyl lysine isopeptide (Lys-Gly) (interchain with G-Cter in SUMO1); alternate cross-link involves residue lysine 115. Lysine 115 participates in a covalent cross-link: Glycyl lysine isopeptide (Lys-Gly) (interchain with G-Cter in SUMO2); alternate. Residues 134–142 (EDIIDTGKT), lysine 166, 186–188 (KFV), and aspartate 194 contribute to the GMP site. The active-site Proton acceptor is aspartate 138. At threonine 142 the chain carries Phosphothreonine. Aspartate 194 provides a ligand contact to Mg(2+).

This sequence belongs to the purine/pyrimidine phosphoribosyltransferase family. In terms of assembly, homotetramer. Mg(2+) is required as a cofactor.

It localises to the cytoplasm. It catalyses the reaction IMP + diphosphate = hypoxanthine + 5-phospho-alpha-D-ribose 1-diphosphate. The catalysed reaction is GMP + diphosphate = guanine + 5-phospho-alpha-D-ribose 1-diphosphate. The protein operates within purine metabolism; IMP biosynthesis via salvage pathway; IMP from hypoxanthine: step 1/1. Functionally, converts guanine to guanosine monophosphate, and hypoxanthine to inosine monophosphate. Transfers the 5-phosphoribosyl group from 5-phosphoribosylpyrophosphate onto the purine. Plays a central role in the generation of purine nucleotides through the purine salvage pathway. The chain is Hypoxanthine-guanine phosphoribosyltransferase (Hprt1) from Rattus norvegicus (Rat).